Here is a 351-residue protein sequence, read N- to C-terminus: Dihydroorotate dehydrogenase (quinone) (351 aa).

Residues 67–71 and Thr-91 contribute to the FMN site; that span reads AGFDK. Lys-71 provides a ligand contact to substrate. Residue 116–120 coordinates substrate; it reads NAMGF. Residues Asn-145 and Asn-178 each coordinate FMN. Asn-178 is a binding site for substrate. Ser-181 acts as the Nucleophile in catalysis. Asn-183 is a binding site for substrate. FMN is bound by residues Lys-214 and Thr-242. 243-244 contributes to the substrate binding site; sequence NT. FMN-binding positions include Gly-262, Gly-291, and 312-313; that span reads YS.

It belongs to the dihydroorotate dehydrogenase family. Type 2 subfamily. Monomer. FMN serves as cofactor.

Its subcellular location is the cell membrane. The enzyme catalyses (S)-dihydroorotate + a quinone = orotate + a quinol. It participates in pyrimidine metabolism; UMP biosynthesis via de novo pathway; orotate from (S)-dihydroorotate (quinone route): step 1/1. Functionally, catalyzes the conversion of dihydroorotate to orotate with quinone as electron acceptor. The protein is Dihydroorotate dehydrogenase (quinone) of Helicobacter pylori (strain G27).